The sequence spans 816 residues: Neuronal PAS domain-containing protein 2 (816 aa).

Residues Met1 to Lys10 show a composition bias toward basic and acidic residues. The tract at residues Met1–Arg21 is disordered. The sufficient for heterodimer formation with BMAL1, E-box binding and for the effect of NADPH stretch occupies residues Met1–Glu61. Residues Ala9–His59 form the bHLH domain. The 71-residue stretch at Asn82–Thr152 folds into the PAS 1 domain. His119 and His171 together coordinate heme b. Residues Phe237–Gly307 form the PAS 2 domain. Residues Ser311–Ala354 enclose the PAC domain. 4 disordered regions span residues Leu364–Thr431, Ile610–Ser639, Gln685–Arg705, and Pro742–Ser816. Residues Ser400 to Arg413 are compositionally biased toward low complexity. Positions His420–Thr431 are enriched in polar residues. A compositionally biased stretch (low complexity) spans Leu623 to Ser639. The segment covering Pro745–Gln759 has biased composition (low complexity). Positions Leu780–Gly789 are enriched in polar residues. Over residues Pro806 to Ser816 the composition is skewed to basic residues.

In terms of assembly, component of the circadian clock oscillator which includes the CRY proteins, CLOCK or NPAS2, BMAL1 or BMAL2, CSNK1D and/or CSNK1E, TIMELESS and the PER proteins. Efficient DNA binding requires dimerization with another bHLH protein. Interacts with NCOA3, KAT2B and CREBBP. Forms a heterodimer with BMAL1 and this heterodimerization is required for E-box-dependent transactivation. Interacts with EP300. Heme serves as cofactor. In terms of tissue distribution, expressed in the retinal ganglion cells (at protein level). Expressed in the hypothalamic suprachiasmatic nuclei (SCN) of the brain. Also found in spinal cord, and to a lesser extent in colon, small intestine and uterus. Exhibits a diurnal variation in its expression in the brain.

The protein localises to the nucleus. With respect to regulation, carbon monoxide (CO) and the redox state of the cell can modulate the transcriptional activity of the NPAS2-BMAL1 heterodimer. NADH and NADPH enhance the DNA-binding activity of the heterodimer whereas CO binds the heme group in NPAS2 and inhibits the DNA-binding activity of the heterodimer. Functionally, transcriptional activator which forms a core component of the circadian clock. The circadian clock, an internal time-keeping system, regulates various physiological processes through the generation of approximately 24 hour circadian rhythms in gene expression, which are translated into rhythms in metabolism and behavior. It is derived from the Latin roots 'circa' (about) and 'diem' (day) and acts as an important regulator of a wide array of physiological functions including metabolism, sleep, body temperature, blood pressure, endocrine, immune, cardiovascular, and renal function. Consists of two major components: the central clock, residing in the suprachiasmatic nucleus (SCN) of the brain, and the peripheral clocks that are present in nearly every tissue and organ system. Both the central and peripheral clocks can be reset by environmental cues, also known as Zeitgebers (German for 'timegivers'). The predominant Zeitgeber for the central clock is light, which is sensed by retina and signals directly to the SCN. The central clock entrains the peripheral clocks through neuronal and hormonal signals, body temperature and feeding-related cues, aligning all clocks with the external light/dark cycle. Circadian rhythms allow an organism to achieve temporal homeostasis with its environment at the molecular level by regulating gene expression to create a peak of protein expression once every 24 hours to control when a particular physiological process is most active with respect to the solar day. Transcription and translation of core clock components (CLOCK, NPAS2, BMAL1, BMAL2, PER1, PER2, PER3, CRY1 and CRY2) plays a critical role in rhythm generation, whereas delays imposed by post-translational modifications (PTMs) are important for determining the period (tau) of the rhythms (tau refers to the period of a rhythm and is the length, in time, of one complete cycle). A diurnal rhythm is synchronized with the day/night cycle, while the ultradian and infradian rhythms have a period shorter and longer than 24 hours, respectively. Disruptions in the circadian rhythms contribute to the pathology of cardiovascular diseases, cancer, metabolic syndromes and aging. A transcription/translation feedback loop (TTFL) forms the core of the molecular circadian clock mechanism. Transcription factors, CLOCK or NPAS2 and BMAL1 or BMAL2, form the positive limb of the feedback loop, act in the form of a heterodimer and activate the transcription of core clock genes and clock-controlled genes (involved in key metabolic processes), harboring E-box elements (5'-CACGTG-3') within their promoters. The core clock genes: PER1/2/3 and CRY1/2 which are transcriptional repressors form the negative limb of the feedback loop and interact with the CLOCK|NPAS2-BMAL1|BMAL2 heterodimer inhibiting its activity and thereby negatively regulating their own expression. This heterodimer also activates nuclear receptors NR1D1/2 and RORA/B/G, which form a second feedback loop and which activate and repress BMAL1 transcription, respectively. The NPAS2-BMAL1 heterodimer positively regulates the expression of MAOA, F7 and LDHA and modulates the circadian rhythm of daytime contrast sensitivity by regulating the rhythmic expression of adenylate cyclase type 1 (ADCY1) in the retina. NPAS2 plays an important role in sleep homeostasis and in maintaining circadian behaviors in normal light/dark and feeding conditions and in the effective synchronization of feeding behavior with scheduled food availability. Regulates the gene transcription of key metabolic pathways in the liver and is involved in DNA damage response by regulating several cell cycle and DNA repair genes. Controls the circadian rhythm of NR0B2 expression by binding rhythmically to its promoter. Mediates the diurnal variation in the expression of GABARA1 receptor in the brain and contributes to the regulation of anxiety-like behaviors and GABAergic neurotransmission in the ventral striatum. This Mus musculus (Mouse) protein is Neuronal PAS domain-containing protein 2 (Npas2).